The primary structure comprises 697 residues: uncharacterized protein (697 aa).

Helical transmembrane passes span 45 to 65 (LCAV…LALL), 86 to 106 (TVAA…MGVV), 128 to 148 (VVVS…GMLA), 198 to 218 (VLLG…WWAL), and 280 to 300 (HLAI…ILAG). ABC transporter domains lie at 251–473 (VRLD…QPQH) and 477–696 (LELV…AGGM). ATP is bound by residues 285–292 (GANGSGKT) and 514–521 (GGNGSGKS). A helical transmembrane segment spans residues 522–542 (TLAWIMAGLTIPTTGACLLDG).

This sequence belongs to the ABC transporter superfamily.

It is found in the cell membrane. This is an uncharacterized protein from Mycobacterium tuberculosis (strain CDC 1551 / Oshkosh).